We begin with the raw amino-acid sequence, 691 residues long: Elongation factor G (691 aa).

Residues 8 to 283 (EKQRNIGIMA…AVVQYLPSPL (276 aa)) form the tr-type G domain. GTP is bound by residues 17–24 (AHIDAGKT), 81–85 (DTPGH), and 135–138 (NKMD).

Belongs to the TRAFAC class translation factor GTPase superfamily. Classic translation factor GTPase family. EF-G/EF-2 subfamily.

Its subcellular location is the cytoplasm. Functionally, catalyzes the GTP-dependent ribosomal translocation step during translation elongation. During this step, the ribosome changes from the pre-translocational (PRE) to the post-translocational (POST) state as the newly formed A-site-bound peptidyl-tRNA and P-site-bound deacylated tRNA move to the P and E sites, respectively. Catalyzes the coordinated movement of the two tRNA molecules, the mRNA and conformational changes in the ribosome. The chain is Elongation factor G from Lawsonia intracellularis (strain PHE/MN1-00).